A 181-amino-acid polypeptide reads, in one-letter code: Small ribosomal subunit protein uS4 (181 aa).

The S4 RNA-binding domain occupies 106–168 (RRLQTLVYRK…PTSRIVKAKV (63 aa)).

The protein belongs to the universal ribosomal protein uS4 family. As to quaternary structure, part of the 30S ribosomal subunit. Contacts protein S5. The interaction surface between S4 and S5 is involved in control of translational fidelity.

Its function is as follows. One of the primary rRNA binding proteins, it binds directly to 16S rRNA where it nucleates assembly of the body of the 30S subunit. With S5 and S12 plays an important role in translational accuracy. In Caldivirga maquilingensis (strain ATCC 700844 / DSM 13496 / JCM 10307 / IC-167), this protein is Small ribosomal subunit protein uS4.